The following is an 85-amino-acid chain: Large ribosomal subunit protein bL27 (85 aa).

The tract at residues 1-20 is disordered; the sequence is MATKKAGGSTRNGRDSEAKR.

Belongs to the bacterial ribosomal protein bL27 family.

The protein is Large ribosomal subunit protein bL27 of Actinobacillus succinogenes (strain ATCC 55618 / DSM 22257 / CCUG 43843 / 130Z).